The sequence spans 255 residues: Myogenic factor 5 (255 aa).

Residues aspartate 83–leucine 134 form the bHLH domain. Residues aspartate 226 to arginine 249 form a disordered region.

Efficient DNA binding requires dimerization with another bHLH protein.

It is found in the nucleus. Acts as a transcriptional activator that promotes transcription of muscle-specific target genes and plays a role in muscle differentiation. Together with MYOG and MYOD1, co-occupies muscle-specific gene promoter core region during myogenesis. Induces fibroblasts to differentiate into myoblasts. Probable sequence specific DNA-binding protein. The protein is Myogenic factor 5 (Myf5) of Mus musculus (Mouse).